Here is a 357-residue protein sequence, read N- to C-terminus: MFESVQGLLDEHAAIQAQLGDPAVYADQKLARKLGRRSAQLNGIVEAYHRWESIRDDLAAAKEMADEDPEFAAEVPELEASLETAAAKLRRLLIPRDPDDARNVILEVKGGEGGDEAALFAADLLRMYSRYAESRGWKTELISATESDLGGYKDVQMAVKGNSNDPAEGVYARLKFEGGVHRVQRVPVTESQGRIHTSAAGVLVLPEVDEPEELEINQNDLKIDVYRSSGPGGQSVNTTDSAVRITHLPTGIVVAMQNEKSQLQNREAGMRVLRARILAHQQEQIDAENSAQRKSQIRTMDRSERIRTYNYPENRIADHRTGYKAYNLDQVMNGDLEPVIQSAIEMDEQARLDAIGE.

The residue at position 234 (Q234) is an N5-methylglutamine.

The protein belongs to the prokaryotic/mitochondrial release factor family. Methylated by PrmC. Methylation increases the termination efficiency of RF1.

Its subcellular location is the cytoplasm. Functionally, peptide chain release factor 1 directs the termination of translation in response to the peptide chain termination codons UAG and UAA. This Arthrobacter sp. (strain FB24) protein is Peptide chain release factor 1.